The chain runs to 508 residues: 2'-5'-oligoadenylate synthase-like protein 2 (508 aa).

Ser69 contributes to the ATP binding site. 3 residues coordinate Mg(2+): Asp81, Asp83, and Asp154. Positions 213 and 216 each coordinate ATP. Residues 435-473 (ILVFVKYPGGQSKPFTIDPDDTILDLKEKIEDAGGPCAE) enclose the Ubiquitin-like domain.

Belongs to the 2-5A synthase family. Mg(2+) serves as cofactor. In terms of tissue distribution, strongly expressed in spleen dendritic cells, whereas, in bone marrow-derived dendritic cells, the amount increases during the maturation process. Expressed in many organs, the highest levels being in thymus, lung, and bone marrow.

The enzyme catalyses 3 ATP = 5'-triphosphoadenylyl-(2'-&gt;5')-adenylyl-(2'-&gt;5')-adenosine + 2 diphosphate. With respect to regulation, produced as a latent enzyme which is activated by dsRNA generated during the course of viral infection. The dsRNA activator must be at least 15 nucleotides long, and no modification of the 2'-hydroxyl group is tolerated. ssRNA or dsDNA do not act as activators. In terms of biological role, interferon-induced, dsRNA-activated antiviral enzyme which plays a critical role in cellular innate antiviral response. Synthesizes oligomers of 2'-5'-oligoadenylates (2-5A) from ATP which then bind to the inactive monomeric form of ribonuclease L (RNase L) leading to its dimerization and subsequent activation. Activation of RNase L leads to degradation of cellular as well as viral RNA, resulting in the inhibition of protein synthesis, thus terminating viral replication. Can mediate the antiviral effect via the classical RNase L-dependent pathway or an alternative antiviral pathway independent of RNase L. This chain is 2'-5'-oligoadenylate synthase-like protein 2 (Oasl2), found in Mus musculus (Mouse).